The primary structure comprises 379 residues: UDP-4-amino-4-deoxy-L-arabinose--oxoglutarate aminotransferase (379 aa).

An N6-(pyridoxal phosphate)lysine modification is found at Lys182.

Belongs to the DegT/DnrJ/EryC1 family. ArnB subfamily. In terms of assembly, homodimer. Pyridoxal 5'-phosphate serves as cofactor.

It catalyses the reaction UDP-4-amino-4-deoxy-beta-L-arabinose + 2-oxoglutarate = UDP-beta-L-threo-pentopyranos-4-ulose + L-glutamate. It functions in the pathway nucleotide-sugar biosynthesis; UDP-4-deoxy-4-formamido-beta-L-arabinose biosynthesis; UDP-4-deoxy-4-formamido-beta-L-arabinose from UDP-alpha-D-glucuronate: step 2/3. It participates in bacterial outer membrane biogenesis; lipopolysaccharide biosynthesis. Functionally, catalyzes the conversion of UDP-4-keto-arabinose (UDP-Ara4O) to UDP-4-amino-4-deoxy-L-arabinose (UDP-L-Ara4N). The modified arabinose is attached to lipid A and is required for resistance to polymyxin and cationic antimicrobial peptides. The polypeptide is UDP-4-amino-4-deoxy-L-arabinose--oxoglutarate aminotransferase (Salmonella dublin (strain CT_02021853)).